We begin with the raw amino-acid sequence, 414 residues long: Putative nickel insertion protein (414 aa).

A disordered region spans residues 70-91 (ATHHDHDHSQDQTHHHHADHAP).

Belongs to the LarC family.

The polypeptide is Putative nickel insertion protein (Picosynechococcus sp. (strain ATCC 27264 / PCC 7002 / PR-6) (Agmenellum quadruplicatum)).